The sequence spans 330 residues: Aspartate--ammonia ligase (330 aa).

It belongs to the class-II aminoacyl-tRNA synthetase family. AsnA subfamily. As to quaternary structure, homodimer.

The protein localises to the cytoplasm. The catalysed reaction is L-aspartate + NH4(+) + ATP = L-asparagine + AMP + diphosphate + H(+). It functions in the pathway amino-acid biosynthesis; L-asparagine biosynthesis; L-asparagine from L-aspartate (ammonia route): step 1/1. This chain is Aspartate--ammonia ligase, found in Salmonella typhi.